The chain runs to 95 residues: Protein TusB (95 aa).

The protein belongs to the DsrH/TusB family. In terms of assembly, heterohexamer, formed by a dimer of trimers. The hexameric TusBCD complex contains 2 copies each of TusB, TusC and TusD. The TusBCD complex interacts with TusE.

It localises to the cytoplasm. Functionally, part of a sulfur-relay system required for 2-thiolation of 5-methylaminomethyl-2-thiouridine (mnm(5)s(2)U) at tRNA wobble positions. In Enterobacter sp. (strain 638), this protein is Protein TusB.